The following is a 285-amino-acid chain: Troponin T, cardiac muscle (285 aa).

Over residues 1–58 (MSDVEEAVEEYEEQEEAAEEEHEEAVEEEAGGEAEAGEPCTAEDGEEEEGREAEDGPV) the composition is skewed to acidic residues. Disordered stretches follow at residues 1-83 (MSDV…GERV) and 111-206 (RKKE…EKKK). Ser-2 carries the N-acetylserine modification. Ser-2 carries the post-translational modification Phosphoserine; by CK2. Pro residues predominate over residues 66-77 (RPFMPNLVPPKI). Basic and acidic residues-rich tracts occupy residues 111–171 (RKKE…DEAR) and 190–206 (QTER…EKKK). Position 191 is a phosphothreonine; by PKC/PRKCA (Thr-191). Ser-195 bears the Phosphoserine; by PKC/PRKCA mark. Position 200 is a phosphothreonine; by PKC/PRKCA and RAF1 (Thr-200). Position 281 is a phosphothreonine; by PKC/PRKCA (Thr-281).

The protein belongs to the troponin T family. The N-terminus is blocked. Post-translationally, phosphorylation at Thr-200 by PRKCA induces significant reduction in myofilament calcium sensitivity and actomyosin ATPase activity.

In terms of biological role, troponin T is the tropomyosin-binding subunit of troponin, the thin filament regulatory complex which confers calcium-sensitivity to striated muscle actomyosin ATPase activity. This is Troponin T, cardiac muscle (TNNT2) from Bos taurus (Bovine).